The following is a 449-amino-acid chain: Glutamate--tRNA ligase (449 aa).

Residues 10-20 carry the 'HIGH' region motif; that stretch reads PSPTGHLHIGN. The 'KMSKS' region signature appears at 214–218; it reads KLSKR. An ATP-binding site is contributed by lysine 217.

This sequence belongs to the class-I aminoacyl-tRNA synthetase family. Glutamate--tRNA ligase type 1 subfamily. In terms of assembly, monomer.

It localises to the cytoplasm. The enzyme catalyses tRNA(Glu) + L-glutamate + ATP = L-glutamyl-tRNA(Glu) + AMP + diphosphate. Its function is as follows. Catalyzes the attachment of glutamate to tRNA(Glu) in a two-step reaction: glutamate is first activated by ATP to form Glu-AMP and then transferred to the acceptor end of tRNA(Glu). The protein is Glutamate--tRNA ligase of Acholeplasma laidlawii (strain PG-8A).